We begin with the raw amino-acid sequence, 499 residues long: BTB/POZ domain-containing protein At5g60050 (499 aa).

Positions 18-30 (PSLSFSPSRISSP) are enriched in low complexity. The tract at residues 18 to 57 (PSLSFSPSRISSPIKLSTASPPLPPPPPPPPNESTLSNPT) is disordered. Residues 38 to 49 (PPLPPPPPPPPN) show a composition bias toward pro residues. The region spanning 99–172 (GDVKLTVVGK…MYSDDLKKKL (74 aa)) is the BTB domain.

Its pathway is protein modification; protein ubiquitination. May act as a substrate-specific adapter of an E3 ubiquitin-protein ligase complex (CUL3-RBX1-BTB) which mediates the ubiquitination and subsequent proteasomal degradation of target proteins. The sequence is that of BTB/POZ domain-containing protein At5g60050 from Arabidopsis thaliana (Mouse-ear cress).